The following is a 314-amino-acid chain: Melanocyte-stimulating hormone receptor (314 aa).

Over 1-35 (MSMLAPLRLVREPWNASEGNQSNATAGAGGAWCQG) the chain is Extracellular. Residues Asn15, Asn20, and Asn23 are each glycosylated (N-linked (GlcNAc...) asparagine). A helical transmembrane segment spans residues 36-61 (LDIPNELFLTLGLVSLVENLLVVAAI). Residues 62 to 70 (LKNRNLHSP) lie on the Cytoplasmic side of the membrane. A helical membrane pass occupies residues 71–91 (TYYFICCLAVSDMLVSVSNLA). Residues 92 to 116 (KTLFMLLMEHGVLVIRASIVRHMDN) lie on the Extracellular side of the membrane. The chain crosses the membrane as a helical span at residues 117 to 138 (VIDMLICSSVVSSLSFLGVIAV). Residues 139 to 161 (DRYITIFYALRYHSIMTLQRAVV) are Cytoplasmic-facing. A helical membrane pass occupies residues 162-181 (TMASVWLASTVSSTVLITYY). The Extracellular portion of the chain corresponds to 182–189 (RNNAILLC). A helical membrane pass occupies residues 190-209 (LIGFFLFMLVLMLVLYIHMF). At 210–237 (ALACHHVRSISSQQKQPTIYRTSSLKGA) the chain is on the cytoplasmic side. The helical transmembrane segment at 238–263 (VTLTILLGVFFICWGPFFFHLILIVT) threads the bilayer. The Extracellular segment spans residues 264–276 (CPTNPFCTCFFSY). A helical membrane pass occupies residues 277–297 (FNLFLILIICNSVVDPLIYAF). Residues 298-314 (RSQELRRTLREVVLCSW) lie on the Cytoplasmic side of the membrane. Cys312 carries the S-palmitoyl cysteine lipid modification.

It belongs to the G-protein coupled receptor 1 family.

Its subcellular location is the cell membrane. Its function is as follows. Receptor for MSH (alpha, beta and gamma) and ACTH. The activity of this receptor is mediated by G proteins which activate adenylate cyclase. Mediates melanogenesis via regulation of cAMP signaling in melanocytes. In Gallus gallus (Chicken), this protein is Melanocyte-stimulating hormone receptor (MC1R).